Consider the following 270-residue polypeptide: Phosphatidylglycerol--prolipoprotein diacylglyceryl transferase (270 aa).

7 helical membrane-spanning segments follow: residues 10–30 (VAVAIGPLQIHWYGLMYLVGI), 56–76 (LIFWLAMGVIVGGRLGYVLFY), 92–112 (WKGGMAFHGGFVGVMIAAWWF), 120–140 (FFQLMDFVAPLVPIGLGAGRI), 175–195 (SQLYQFALEGVALFIILNLYA), 202–222 (MAVSGMFALFYGIFRFVVEFV), and 237–257 (VTMGQILSLPMIIAGLFLIWL). Position 139 (Arg139) interacts with a 1,2-diacyl-sn-glycero-3-phospho-(1'-sn-glycerol).

The protein belongs to the Lgt family.

It is found in the cell inner membrane. It carries out the reaction L-cysteinyl-[prolipoprotein] + a 1,2-diacyl-sn-glycero-3-phospho-(1'-sn-glycerol) = an S-1,2-diacyl-sn-glyceryl-L-cysteinyl-[prolipoprotein] + sn-glycerol 1-phosphate + H(+). It participates in protein modification; lipoprotein biosynthesis (diacylglyceryl transfer). Functionally, catalyzes the transfer of the diacylglyceryl group from phosphatidylglycerol to the sulfhydryl group of the N-terminal cysteine of a prolipoprotein, the first step in the formation of mature lipoproteins. The chain is Phosphatidylglycerol--prolipoprotein diacylglyceryl transferase from Pseudomonas syringae pv. tomato (strain ATCC BAA-871 / DC3000).